The primary structure comprises 402 residues: Alanine racemase (402 aa).

Lys-34 acts as the Proton acceptor; specific for D-alanine in catalysis. At Lys-34 the chain carries N6-(pyridoxal phosphate)lysine. Arg-133 contacts substrate. Positions 226–271 (EVSYNLSYKEKFERNTPALATTVCINKCADVNTRLTYKVPLKGSYR) constitute an RPE1 insert domain. Tyr-296 serves as the catalytic Proton acceptor; specific for L-alanine. Met-344 contacts substrate.

This sequence belongs to the alanine racemase family. It depends on pyridoxal 5'-phosphate as a cofactor.

The catalysed reaction is L-alanine = D-alanine. Its pathway is amino-acid biosynthesis; D-alanine biosynthesis; D-alanine from L-alanine: step 1/1. Catalyzes the interconversion of L-alanine and D-alanine. May also act on other amino acids. The polypeptide is Alanine racemase (alr) (Rickettsia typhi (strain ATCC VR-144 / Wilmington)).